The primary structure comprises 267 residues: MRAFRIAYDGTGFRGFQRQPHGETVENALFEALSSLGVAFEDGRPPGYAAAGRTDAGVSARAQTVAFEAPAWLLPRALNGELPASVRAWAAADVGDAFHATHDATARAYRYFLYAPEPSADTTRARAACARLSGSHDFHNFTPDDRGTERTLSMRLRRQGPFLVVDCRAGGFARQLVRRLVAAVAAVARGERPLSFLGRALDDDPLSGADGIAAAPPEPLLLADVVYPGVEFTVDDRAAESARTVFATRRRQRLADARVAGALSPPE.

Asp55 serves as the catalytic Nucleophile. Tyr109 contacts substrate.

The protein belongs to the tRNA pseudouridine synthase TruA family.

It catalyses the reaction uridine(38/39/40) in tRNA = pseudouridine(38/39/40) in tRNA. Its function is as follows. Formation of pseudouridine at positions 38, 39 and 40 in the anticodon stem and loop of transfer RNAs. In Natronomonas pharaonis (strain ATCC 35678 / DSM 2160 / CIP 103997 / JCM 8858 / NBRC 14720 / NCIMB 2260 / Gabara) (Halobacterium pharaonis), this protein is tRNA pseudouridine synthase A.